The chain runs to 785 residues: Probable splicing factor 3A subunit 1 (785 aa).

Met1 is subject to N-acetylmethionine. Residues 1 to 42 are disordered; sequence MFSSMQILPLEAPPTDGKLGPLPPSQLTDQEVEERELQAEQN. One copy of the SURP motif 1 repeat lies at 71 to 113; it reads IVEKTAQFVSKNGLEFEKRIIVSNEKNAKFNFLKSSDPYHAFY. Residues 124–175 are disordered; that stretch reads NKDGAQGTDDSDGTTDPQLDTGAADESEAGDTQPDLQAQFRIPSKPLEAPEP. An SURP motif 2 repeat occupies 193 to 235; that stretch reads IIKLTAQFVARNGKSFLTGLSNRENNNPQFHFMKPTHSMFTFF. Disordered regions lie at residues 522-554 and 639-713; these read NANG…GVPI and RPYG…PNEN. 2 stretches are compositionally biased toward pro residues: residues 543 to 554 and 653 to 674; these read AALPPPRPGVPI and QPPP…PPLP. The span at 677–686 shows a compositional bias: basic and acidic residues; that stretch reads PEAKRQKFDE. The Ubiquitin-like domain occupies 707 to 782; that stretch reads VSKPNENDGQ…LTLSLRERGG (76 aa).

In terms of assembly, component of splicing factor SF3A which is composed of three subunits.

The protein localises to the nucleus. The protein is Probable splicing factor 3A subunit 1 of Arabidopsis thaliana (Mouse-ear cress).